The chain runs to 273 residues: Spore development regulator vosA (273 aa).

Residues 66–75 show a composition bias toward low complexity; it reads STTQELQSTQ. The tract at residues 66 to 86 is disordered; that stretch reads STTQELQSTQPIAVRQQPRAA. Residues 70–253 enclose the Velvet domain; that stretch reads ELQSTQPIAV…KEQGCIISIK (184 aa). The short motif at 211–218 is the Nuclear localization signal element; the sequence is FPTLTEIK. The span at 254-267 shows a compositional bias: basic and acidic residues; that stretch reads KGNERARPRGADGR. Positions 254–273 are disordered; the sequence is KGNERARPRGADGRSDDEDD.

This sequence belongs to the velvet family. VosA subfamily. As to quaternary structure, forms a heterodimeric complex with velB; the formation of the velB-vosA complex is light-dependent.

Its subcellular location is the nucleus. Its function is as follows. Component of the velB-vosA heterodimeric complex that plays a dual role in activating genes associated with spore maturation and repressing certain development-associated genes. The complex binds DNA through the DNA-binding domain of vosA that recognizes an 11-nucleotide consensus sequence 5'-CTGGCCGCGGC-3' consisting of two motifs in the promoters of key developmental regulatory genes. Positively regulates the expression of wetA and represses abaA and brlA. Acts as a crucial regulator of both conidiation capacity and conidial quality. Responsible for the synthesis and accumulation of intracellular trehalose. This Beauveria bassiana (strain ARSEF 2860) (White muscardine disease fungus) protein is Spore development regulator vosA.